The chain runs to 330 residues: MKIAIIGAGAWGTAIAMLLARNNYRVTLYTRHSAHTQEINQLHTNKKYLPNIILPNIIKATSNFSDIVDHEIIIIVTPSDQVRATIENLKQHSISNNAIIGIASKGLDHNQSKLLSDVVKDYLANNPLFIIAGPNLANEVAQGLPCALTIAAIQKEVQFNISTLFHSTNVITSTTEDIITIQVASAFKNIIAIIAGIIIAKQYGQNCKASIITQGIKEIVAFARAAGSTNPDISQFGVIGDLILTSYAITSRNTKFGYDLGQHEYYTNLINNTNPNLIEGIKAAKILYPLTVKQNLNCHIIDCAYSILHNGSKISYAIECMLKKINHETK.

Residues W11, R31, H32, and K105 each contribute to the NADPH site. Residues K105 and G133 each contribute to the sn-glycerol 3-phosphate site. An NADPH-binding site is contributed by A137. Positions 188, 241, 251, 252, and 253 each coordinate sn-glycerol 3-phosphate. The Proton acceptor role is filled by K188. R252 lines the NADPH pocket. NADPH contacts are provided by L277 and E279.

It belongs to the NAD-dependent glycerol-3-phosphate dehydrogenase family.

The protein localises to the cytoplasm. The catalysed reaction is sn-glycerol 3-phosphate + NAD(+) = dihydroxyacetone phosphate + NADH + H(+). It carries out the reaction sn-glycerol 3-phosphate + NADP(+) = dihydroxyacetone phosphate + NADPH + H(+). It participates in membrane lipid metabolism; glycerophospholipid metabolism. Its function is as follows. Catalyzes the reduction of the glycolytic intermediate dihydroxyacetone phosphate (DHAP) to sn-glycerol 3-phosphate (G3P), the key precursor for phospholipid synthesis. The sequence is that of Glycerol-3-phosphate dehydrogenase [NAD(P)+] from Orientia tsutsugamushi (strain Boryong) (Rickettsia tsutsugamushi).